Consider the following 131-residue polypeptide: D-ribose pyranase (131 aa).

H20 functions as the Proton donor in the catalytic mechanism. Residues D28, H98, and 120–122 each bind substrate; that span reads YAN.

The protein belongs to the RbsD / FucU family. RbsD subfamily. Homodecamer.

The protein localises to the cytoplasm. The enzyme catalyses beta-D-ribopyranose = beta-D-ribofuranose. It participates in carbohydrate metabolism; D-ribose degradation; D-ribose 5-phosphate from beta-D-ribopyranose: step 1/2. Functionally, catalyzes the interconversion of beta-pyran and beta-furan forms of D-ribose. This chain is D-ribose pyranase, found in Clostridium perfringens (strain SM101 / Type A).